The sequence spans 248 residues: ATP synthase subunit a (248 aa).

The next 6 helical transmembrane spans lie at 34 to 54 (TNVT…LVAG), 91 to 111 (YFPY…LGLI), 121 to 141 (IAVT…IGFV), 147 to 167 (FLSL…LAVI), 197 to 217 (FAGF…VMAI), and 220 to 240 (LEVL…CVYL).

Belongs to the ATPase A chain family. F-type ATPases have 2 components, CF(1) - the catalytic core - and CF(0) - the membrane proton channel. CF(1) has five subunits: alpha(3), beta(3), gamma(1), delta(1), epsilon(1). CF(0) has four main subunits: a, b, b' and c.

It is found in the cell inner membrane. Key component of the proton channel; it plays a direct role in the translocation of protons across the membrane. In Dinoroseobacter shibae (strain DSM 16493 / NCIMB 14021 / DFL 12), this protein is ATP synthase subunit a.